Reading from the N-terminus, the 469-residue chain is MSKQEQSNQIHIVLGLGCSGISAAKLLKTEGKNVLVLENNSNKNLLNISNKLKSEGINVILLDEALHINNFTPWIESVCSITVSPGIDWEHIALKELRGKNINVQGEVALAWERLTHIPSVGITGTNGKTTVTNMLNHILKLNNLNTDMGGNVGKALSKIALENMKNNDQELDWLVLELSSFQIEGSPKVAPTIGIWTTFTPDHLERHNDMESYFKIKRSLLEKSSIRIYNSDDQYLSSKRKELPKGIWVGTNQQSLYSQYQKFWIDQKGYIFEDKKQLFHSSILNIPGKHNLQNLLLAIAAAREIGLDDSSIAKSIKSFKSIPHRLEYLGNVNNLSFYNDSKATNFDSSITALKSVPHPIILLAGGIQKKGDFMPWVKQIKQSTNGIVLFGLSANNLKEELLISSYIGEIIVKKNLEEATIASINIARETNSRSILLSPACASFDQYKNYEERGDHFKNLVKKYKLIK.

Position 125–131 (125–131) interacts with ATP; the sequence is GTNGKTT.

This sequence belongs to the MurCDEF family.

The protein resides in the cytoplasm. The enzyme catalyses UDP-N-acetyl-alpha-D-muramoyl-L-alanine + D-glutamate + ATP = UDP-N-acetyl-alpha-D-muramoyl-L-alanyl-D-glutamate + ADP + phosphate + H(+). It participates in cell wall biogenesis; peptidoglycan biosynthesis. Cell wall formation. Catalyzes the addition of glutamate to the nucleotide precursor UDP-N-acetylmuramoyl-L-alanine (UMA). This chain is UDP-N-acetylmuramoylalanine--D-glutamate ligase, found in Prochlorococcus marinus (strain NATL2A).